Consider the following 368-residue polypeptide: D-Ala-D/L-Ala epimerase (368 aa).

Residues Thr135 and 160-162 (KVK) contribute to the substrate site. Mg(2+)-binding residues include Asp190, Glu216, and Asp241. Residues Lys265 and 318–320 (DFD) each bind substrate.

It belongs to the mandelate racemase/muconate lactonizing enzyme family. Requires Mg(2+) as cofactor.

Catalyzes the epimerization of D-Ala-D-Ala to D-Ala-L-Ala. Has broad substrate specificity and catalyzes the epimerization of a variety of dipeptides containing an N-terminal Ala followed by a hydrophobic or polar residue, such as Val, Ser and Met (in vitro). This Cytophaga hutchinsonii (strain ATCC 33406 / DSM 1761 / CIP 103989 / NBRC 15051 / NCIMB 9469 / D465) protein is D-Ala-D/L-Ala epimerase (tfdD).